A 152-amino-acid polypeptide reads, in one-letter code: Large ribosomal subunit protein bL9 (152 aa).

The protein belongs to the bacterial ribosomal protein bL9 family.

Functionally, binds to the 23S rRNA. The protein is Large ribosomal subunit protein bL9 of Synechococcus sp. (strain CC9311).